Consider the following 124-residue polypeptide: Large ribosomal subunit protein bL12 (124 aa).

The protein belongs to the bacterial ribosomal protein bL12 family. As to quaternary structure, homodimer. Part of the ribosomal stalk of the 50S ribosomal subunit. Forms a multimeric L10(L12)X complex, where L10 forms an elongated spine to which 2 to 4 L12 dimers bind in a sequential fashion. Binds GTP-bound translation factors.

Functionally, forms part of the ribosomal stalk which helps the ribosome interact with GTP-bound translation factors. Is thus essential for accurate translation. The chain is Large ribosomal subunit protein bL12 from Cereibacter sphaeroides (strain ATCC 17025 / ATH 2.4.3) (Rhodobacter sphaeroides).